A 201-amino-acid polypeptide reads, in one-letter code: Holliday junction branch migration complex subunit RuvA (201 aa).

Positions 1 to 63 (MYDYIKGTVT…EDNISLFGFQ (63 aa)) are domain I. A domain II region spans residues 64-142 (TTEERYLFKK…DVVASEIVYV (79 aa)). The interval 143-153 (APENDMVAGLS) is flexible linker. Positions 153–201 (SPQLEEAVLALEALGYSTRELKKVIPKLAKEEDLTSDAYIKLALQLMTK) are domain III.

The protein belongs to the RuvA family. As to quaternary structure, homotetramer. Forms an RuvA(8)-RuvB(12)-Holliday junction (HJ) complex. HJ DNA is sandwiched between 2 RuvA tetramers; dsDNA enters through RuvA and exits via RuvB. An RuvB hexamer assembles on each DNA strand where it exits the tetramer. Each RuvB hexamer is contacted by two RuvA subunits (via domain III) on 2 adjacent RuvB subunits; this complex drives branch migration. In the full resolvosome a probable DNA-RuvA(4)-RuvB(12)-RuvC(2) complex forms which resolves the HJ.

It localises to the cytoplasm. The RuvA-RuvB-RuvC complex processes Holliday junction (HJ) DNA during genetic recombination and DNA repair, while the RuvA-RuvB complex plays an important role in the rescue of blocked DNA replication forks via replication fork reversal (RFR). RuvA specifically binds to HJ cruciform DNA, conferring on it an open structure. The RuvB hexamer acts as an ATP-dependent pump, pulling dsDNA into and through the RuvAB complex. HJ branch migration allows RuvC to scan DNA until it finds its consensus sequence, where it cleaves and resolves the cruciform DNA. This is Holliday junction branch migration complex subunit RuvA from Listeria monocytogenes serotype 4a (strain HCC23).